The sequence spans 338 residues: Ketol-acid reductoisomerase (NADP(+)) (338 aa).

The region spanning 1 to 181 is the KARI N-terminal Rossmann domain; it reads MKVFYDKDAD…GGGRAGIIET (181 aa). Residues 24–27, Arg-47, and Ser-52 contribute to the NADP(+) site; that span reads YGSQ. The active site involves His-107. An NADP(+)-binding site is contributed by Gly-133. One can recognise a KARI C-terminal knotted domain in the interval 182-327; the sequence is NFREETETDL…EKLRAMMPWI (146 aa). Residues Asp-190, Glu-194, Glu-226, and Glu-230 each contribute to the Mg(2+) site. Ser-251 provides a ligand contact to substrate.

This sequence belongs to the ketol-acid reductoisomerase family. It depends on Mg(2+) as a cofactor.

The enzyme catalyses (2R)-2,3-dihydroxy-3-methylbutanoate + NADP(+) = (2S)-2-acetolactate + NADPH + H(+). It carries out the reaction (2R,3R)-2,3-dihydroxy-3-methylpentanoate + NADP(+) = (S)-2-ethyl-2-hydroxy-3-oxobutanoate + NADPH + H(+). It functions in the pathway amino-acid biosynthesis; L-isoleucine biosynthesis; L-isoleucine from 2-oxobutanoate: step 2/4. Its pathway is amino-acid biosynthesis; L-valine biosynthesis; L-valine from pyruvate: step 2/4. Its function is as follows. Involved in the biosynthesis of branched-chain amino acids (BCAA). Catalyzes an alkyl-migration followed by a ketol-acid reduction of (S)-2-acetolactate (S2AL) to yield (R)-2,3-dihydroxy-isovalerate. In the isomerase reaction, S2AL is rearranged via a Mg-dependent methyl migration to produce 3-hydroxy-3-methyl-2-ketobutyrate (HMKB). In the reductase reaction, this 2-ketoacid undergoes a metal-dependent reduction by NADPH to yield (R)-2,3-dihydroxy-isovalerate. The polypeptide is Ketol-acid reductoisomerase (NADP(+)) (Cupriavidus taiwanensis (strain DSM 17343 / BCRC 17206 / CCUG 44338 / CIP 107171 / LMG 19424 / R1) (Ralstonia taiwanensis (strain LMG 19424))).